A 381-amino-acid chain; its full sequence is Cytochrome b (381 aa).

4 consecutive transmembrane segments (helical) span residues 34-54 (FGSL…FLAM), 78-99 (WLIR…YLHI), 114-134 (WNIG…GYVL), and 179-199 (FFAF…IHLL). His84 and His98 together coordinate heme b. The heme b site is built by His183 and His197. His202 serves as a coordination point for a ubiquinone. The next 4 helical transmembrane spans lie at 227–247 (YKDL…ALFL), 289–309 (LGGV…PMLH), 321–341 (MTQF…WIGG), and 348–368 (FILV…IIIP).

It belongs to the cytochrome b family. As to quaternary structure, the cytochrome bc1 complex contains 3 respiratory subunits (MT-CYB, CYC1 and UQCRFS1), 2 core proteins (UQCRC1 and UQCRC2) and probably 6 low-molecular weight proteins. Heme b serves as cofactor.

The protein resides in the mitochondrion inner membrane. Component of the ubiquinol-cytochrome c reductase complex (complex III or cytochrome b-c1 complex) that is part of the mitochondrial respiratory chain. The b-c1 complex mediates electron transfer from ubiquinol to cytochrome c. Contributes to the generation of a proton gradient across the mitochondrial membrane that is then used for ATP synthesis. The chain is Cytochrome b (mt-cyb) from Squalus acanthias (Spiny dogfish).